We begin with the raw amino-acid sequence, 273 residues long: Thiazole synthase (273 aa).

Lys-110 (schiff-base intermediate with DXP) is an active-site residue. Residues Gly-171, 198–199 (AG), and 220–221 (NS) contribute to the 1-deoxy-D-xylulose 5-phosphate site.

This sequence belongs to the ThiG family. In terms of assembly, homotetramer. Forms heterodimers with either ThiH or ThiS.

It is found in the cytoplasm. It carries out the reaction [ThiS sulfur-carrier protein]-C-terminal-Gly-aminoethanethioate + 2-iminoacetate + 1-deoxy-D-xylulose 5-phosphate = [ThiS sulfur-carrier protein]-C-terminal Gly-Gly + 2-[(2R,5Z)-2-carboxy-4-methylthiazol-5(2H)-ylidene]ethyl phosphate + 2 H2O + H(+). Its pathway is cofactor biosynthesis; thiamine diphosphate biosynthesis. Functionally, catalyzes the rearrangement of 1-deoxy-D-xylulose 5-phosphate (DXP) to produce the thiazole phosphate moiety of thiamine. Sulfur is provided by the thiocarboxylate moiety of the carrier protein ThiS. In vitro, sulfur can be provided by H(2)S. The polypeptide is Thiazole synthase (Hydrogenovibrio crunogenus (strain DSM 25203 / XCL-2) (Thiomicrospira crunogena)).